We begin with the raw amino-acid sequence, 214 residues long: Potassium-transporting ATPase KdpC subunit (214 aa).

A helical membrane pass occupies residues Leu17–Phe37.

This sequence belongs to the KdpC family. The system is composed of three essential subunits: KdpA, KdpB and KdpC.

The protein resides in the cell inner membrane. Part of the high-affinity ATP-driven potassium transport (or Kdp) system, which catalyzes the hydrolysis of ATP coupled with the electrogenic transport of potassium into the cytoplasm. This subunit acts as a catalytic chaperone that increases the ATP-binding affinity of the ATP-hydrolyzing subunit KdpB by the formation of a transient KdpB/KdpC/ATP ternary complex. The protein is Potassium-transporting ATPase KdpC subunit of Microcystis aeruginosa (strain NIES-843 / IAM M-2473).